Consider the following 317-residue polypeptide: Transaldolase A (317 aa).

The active-site Schiff-base intermediate with substrate is lysine 132.

Belongs to the transaldolase family. Type 1 subfamily. Homodimer.

The protein localises to the cytoplasm. It carries out the reaction D-sedoheptulose 7-phosphate + D-glyceraldehyde 3-phosphate = D-erythrose 4-phosphate + beta-D-fructose 6-phosphate. Its pathway is carbohydrate degradation; pentose phosphate pathway; D-glyceraldehyde 3-phosphate and beta-D-fructose 6-phosphate from D-ribose 5-phosphate and D-xylulose 5-phosphate (non-oxidative stage): step 2/3. Functionally, transaldolase is important for the balance of metabolites in the pentose-phosphate pathway. This is Transaldolase A (talA) from Pasteurella multocida (strain Pm70).